A 422-amino-acid polypeptide reads, in one-letter code: Electron transfer flavoprotein subunit alpha (422 aa).

Residues 61 to 80 (KRIDRSGTQQGAGGGKASAS) are disordered. FAD-binding positions include 329–330 (SR), 343–347 (QVGAT), 360–367 (GISGAIQH), and Asn381.

This sequence belongs to the ETF alpha-subunit/FixB family. In terms of assembly, heterodimer of an alpha and a beta subunit. FAD is required as a cofactor.

Participates in the electron transfer process during N,N-dimethylglycine (DMG) degradation to sarcosine. The chain is Electron transfer flavoprotein subunit alpha from Chromohalobacter salexigens (strain ATCC BAA-138 / DSM 3043 / CIP 106854 / NCIMB 13768 / 1H11).